Here is a 398-residue protein sequence, read N- to C-terminus: Subtilisin-like protease CPC735_015300 (398 aa).

Residues 1–19 (MGFIKTLSLSLAAASAANA) form the signal peptide. Positions 20-116 (AKILSPSRPD…IEHDHVVRLT (97 aa)) are excised as a propeptide. The region spanning 35–115 (QYIVVMKDGV…FIEHDHVVRL (81 aa)) is the Inhibitor I9 domain. The Peptidase S8 domain maps to 126 to 398 (TWGLGRVSHQ…NKLTYNGNGQ (273 aa)). Catalysis depends on charge relay system residues D158 and H189. N-linked (GlcNAc...) asparagine glycosylation occurs at N250. S344 (charge relay system) is an active-site residue. N362 carries an N-linked (GlcNAc...) asparagine glycan.

This sequence belongs to the peptidase S8 family.

The protein localises to the secreted. Functionally, secreted subtilisin-like serine protease with keratinolytic activity that contributes to pathogenicity. This Coccidioides posadasii (strain C735) (Valley fever fungus) protein is Subtilisin-like protease CPC735_015300.